The following is a 223-amino-acid chain: Translation initiation factor 6 (223 aa).

Belongs to the eIF-6 family.

Its function is as follows. Binds to the 50S ribosomal subunit and prevents its association with the 30S ribosomal subunit to form the 70S initiation complex. The polypeptide is Translation initiation factor 6 (Saccharolobus islandicus (strain M.16.27) (Sulfolobus islandicus)).